Consider the following 289-residue polypeptide: uncharacterized protein (289 aa).

This is an uncharacterized protein from Archaeoglobus fulgidus (strain ATCC 49558 / DSM 4304 / JCM 9628 / NBRC 100126 / VC-16).